The chain runs to 117 residues: Immunoglobulin lambda variable 1-44 (117 aa).

Positions 1 to 19 are cleaved as a signal peptide; sequence MASFPLLLTLLTHCAGSWA. Position 20 is a pyrrolidone carboxylic acid (Gln20). Residues 20–44 are framework-1; sequence QSVLTQPPSASGTPGQRVTISCSGS. In terms of domain architecture, Ig-like spans 20–117; it reads QSVLTQPPSA…CAAWDDSLNG (98 aa). The span at 24-35 shows a compositional bias: polar residues; that stretch reads TQPPSASGTPGQ. Residues 24-45 are disordered; sequence TQPPSASGTPGQRVTISCSGSS. Cys41 and Cys108 are disulfide-bonded. Residues 45 to 52 are complementarity-determining-1; the sequence is SSNIGSNT. The framework-2 stretch occupies residues 53 to 69; that stretch reads VNWYQQLPGTAPKLLIY. Residues 70-72 are complementarity-determining-2; sequence SNN. The tract at residues 73–108 is framework-3; it reads QRPSGVPDRFSGSKSGTSASLAISGLQSEDEADYYC. The interval 109-117 is complementarity-determining-3; the sequence is AAWDDSLNG.

In terms of assembly, immunoglobulins are composed of two identical heavy chains and two identical light chains; disulfide-linked.

It localises to the secreted. The protein localises to the cell membrane. Its function is as follows. V region of the variable domain of immunoglobulin light chains that participates in the antigen recognition. Immunoglobulins, also known as antibodies, are membrane-bound or secreted glycoproteins produced by B lymphocytes. In the recognition phase of humoral immunity, the membrane-bound immunoglobulins serve as receptors which, upon binding of a specific antigen, trigger the clonal expansion and differentiation of B lymphocytes into immunoglobulins-secreting plasma cells. Secreted immunoglobulins mediate the effector phase of humoral immunity, which results in the elimination of bound antigens. The antigen binding site is formed by the variable domain of one heavy chain, together with that of its associated light chain. Thus, each immunoglobulin has two antigen binding sites with remarkable affinity for a particular antigen. The variable domains are assembled by a process called V-(D)-J rearrangement and can then be subjected to somatic hypermutations which, after exposure to antigen and selection, allow affinity maturation for a particular antigen. The sequence is that of Immunoglobulin lambda variable 1-44 from Homo sapiens (Human).